We begin with the raw amino-acid sequence, 89 residues long: Small ribosomal subunit protein uS15 (89 aa).

It belongs to the universal ribosomal protein uS15 family. In terms of assembly, part of the 30S ribosomal subunit. Forms a bridge to the 50S subunit in the 70S ribosome, contacting the 23S rRNA.

Its function is as follows. One of the primary rRNA binding proteins, it binds directly to 16S rRNA where it helps nucleate assembly of the platform of the 30S subunit by binding and bridging several RNA helices of the 16S rRNA. Forms an intersubunit bridge (bridge B4) with the 23S rRNA of the 50S subunit in the ribosome. The protein is Small ribosomal subunit protein uS15 of Gluconacetobacter diazotrophicus (strain ATCC 49037 / DSM 5601 / CCUG 37298 / CIP 103539 / LMG 7603 / PAl5).